Reading from the N-terminus, the 382-residue chain is Protein RecA (382 aa).

The tract at residues 1–20 (MPADVKAAQSSAGDSRPGER) is disordered. 79–86 (GPESSGKT) is an ATP binding site. Residues 360–369 (SAAAKPSAKT) show a composition bias toward low complexity. The interval 360–382 (SAAAKPSAKTADTDKKLVADGAA) is disordered. Basic and acidic residues predominate over residues 370–382 (ADTDKKLVADGAA).

This sequence belongs to the RecA family.

Its subcellular location is the cytoplasm. Its function is as follows. Can catalyze the hydrolysis of ATP in the presence of single-stranded DNA, the ATP-dependent uptake of single-stranded DNA by duplex DNA, and the ATP-dependent hybridization of homologous single-stranded DNAs. It interacts with LexA causing its activation and leading to its autocatalytic cleavage. The polypeptide is Protein RecA (Synechococcus sp. (strain CC9311)).